Here is a 629-residue protein sequence, read N- to C-terminus: Transmembrane 9 superfamily protein C1105.08 (629 aa).

Residues 1–26 (MLLPSIPSCSFSFVVFVSVLLQTCFS) form the signal peptide. The Lumenal portion of the chain corresponds to 27-266 (FQLTPLSPKN…MHIESRQIRW (240 aa)). A glycan (N-linked (GlcNAc...) asparagine) is linked at asparagine 157. The helical transmembrane segment at 267-287 (IFIIHSAIIDTFLIFVVSIIL) threads the bilayer. Topologically, residues 288 to 337 (YRTLNRDINKYNSAFVDQEDVQEDFGWKLVHGDVFRPPRRPMLFSILLGT) are cytoplasmic. A helical transmembrane segment spans residues 338–358 (GAQLLFMSSGIVLFAIFGIVA). Topologically, residues 359 to 364 (PSRRGS) are lumenal. A helical membrane pass occupies residues 365 to 385 (LATATVALFIISGFVSGYVSA). Residues 386 to 401 (LSYKLMQGMLRKRNLL) lie on the Cytoplasmic side of the membrane. Residues 402–422 (LTPFVVPGFMLAAALFFNMVF) traverse the membrane as a helical segment. Residues 423–436 (WSKSSSSTVPFSSW) are Lumenal-facing. The chain crosses the membrane as a helical span at residues 437-457 (LLLIFLYLLFTVPLSFVGSLI). At 458-488 (GFRSREFVPPVRTNQIPRQIPSHSIWLSSFP) the chain is on the cytoplasmic side. The chain crosses the membrane as a helical span at residues 489 to 509 (SAIIGGSIPFLVILIELFSIL). Residues 510–519 (DSLWFHPLYF) lie on the Lumenal side of the membrane. A helical transmembrane segment spans residues 520 to 544 (MFGFSFFCFGILVTTCIMVSIITVY). The Cytoplasmic portion of the chain corresponds to 545 to 558 (FQLCSENYNWWWRS). A helical membrane pass occupies residues 559 to 579 (FITPGFCGIYVFIFSVFYWFF). Residues 580–598 (KISSSSLATAVLYFGYSLL) lie on the Lumenal side of the membrane. The chain crosses the membrane as a helical span at residues 599–619 (ISVLVFFLCGSVGFFGAFLFV). Over 620–629 (NKIYASIKID) the chain is Cytoplasmic.

This sequence belongs to the nonaspanin (TM9SF) (TC 9.A.2) family.

The protein resides in the golgi apparatus membrane. It localises to the vacuole membrane. The polypeptide is Transmembrane 9 superfamily protein C1105.08 (Schizosaccharomyces pombe (strain 972 / ATCC 24843) (Fission yeast)).